The primary structure comprises 205 residues: Holliday junction branch migration complex subunit RuvA (205 aa).

The interval 1-62 (MFEYVTGYVE…EDIMALYGFK (62 aa)) is domain I. The interval 63–141 (TREERLLFTK…DVVPDVFVDL (79 aa)) is domain II. Residues 142 to 152 (FSDEERFDEKK) are flexible linker. Residues 153–205 (GSSTELDEALEALRALGYAEREINRVLPELLKESLTTDQYIKKALSLLLNGKR) are domain III.

It belongs to the RuvA family. As to quaternary structure, homotetramer. Forms an RuvA(8)-RuvB(12)-Holliday junction (HJ) complex. HJ DNA is sandwiched between 2 RuvA tetramers; dsDNA enters through RuvA and exits via RuvB. An RuvB hexamer assembles on each DNA strand where it exits the tetramer. Each RuvB hexamer is contacted by two RuvA subunits (via domain III) on 2 adjacent RuvB subunits; this complex drives branch migration. In the full resolvosome a probable DNA-RuvA(4)-RuvB(12)-RuvC(2) complex forms which resolves the HJ.

The protein resides in the cytoplasm. Functionally, the RuvA-RuvB-RuvC complex processes Holliday junction (HJ) DNA during genetic recombination and DNA repair, while the RuvA-RuvB complex plays an important role in the rescue of blocked DNA replication forks via replication fork reversal (RFR). RuvA specifically binds to HJ cruciform DNA, conferring on it an open structure. The RuvB hexamer acts as an ATP-dependent pump, pulling dsDNA into and through the RuvAB complex. HJ branch migration allows RuvC to scan DNA until it finds its consensus sequence, where it cleaves and resolves the cruciform DNA. In Bacillus cytotoxicus (strain DSM 22905 / CIP 110041 / 391-98 / NVH 391-98), this protein is Holliday junction branch migration complex subunit RuvA.